The sequence spans 449 residues: Heterogeneous nuclear ribonucleoprotein H2 (449 aa).

Met-1 is subject to N-acetylmethionine. N-acetylmethionine; in Heterogeneous nuclear ribonucleoprotein H2, N-terminally processed is present on Met-2. The RRM 1 domain occupies 11–90 (FVVKVRGLPW…RYVEVFKSNS (80 aa)). Ser-23 bears the Phosphoserine mark. Lys-35 is covalently cross-linked (Glycyl lysine isopeptide (Lys-Gly) (interchain with G-Cter in SUMO2)). Ser-54 and Ser-63 each carry phosphoserine. Lys-87 is covalently cross-linked (Glycyl lysine isopeptide (Lys-Gly) (interchain with G-Cter in SUMO2)). Ser-90 carries the phosphoserine modification. A Glycyl lysine isopeptide (Lys-Gly) (interchain with G-Cter in SUMO2) cross-link involves residue Lys-98. In terms of domain architecture, RRM 2 spans 111–188 (GFVRLRGLPF…RYIEIFKSSR (78 aa)). Arg-233 bears the Dimethylated arginine; alternate mark. Residue Arg-233 is modified to Omega-N-methylarginine; alternate. The 1-1 repeat unit spans residues 234–249 (GAYGGGYGGYDDYGGY). The 2 X 16 AA Gly-rich approximate repeats stretch occupies residues 234–433 (GAYGGGYGGY…YGGQSSMSGY (200 aa)). A Phosphotyrosine modification is found at Tyr-246. One can recognise an RRM 3 domain in the interval 289 to 364 (HCVHMRGLPY…RYVELFLNST (76 aa)). Residue Ser-310 is modified to Phosphoserine. 3 repeat units span residues 354–372 (HRYVELFLNSTAGTSGGAY), 374–392 (HSYVELFLNSTAGASGGAY), and 418–433 (GGYGGGYGGQSSMSGY). Positions 354–392 (HRYVELFLNSTAGTSGGAYDHSYVELFLNSTAGASGGAY) are 2 X 19 AA perfect repeats.

As to quaternary structure, component of a ribonucleoprotein complex containing mRNAs and RNA-binding proteins including DDX5, HNRNPH2 and SRSF1 as well as splicing regulator ARVCF. Interacts with TXNL4/DIM1. As to expression, expressed ubiquitously.

The protein resides in the nucleus. It is found in the nucleoplasm. This protein is a component of the heterogeneous nuclear ribonucleoprotein (hnRNP) complexes which provide the substrate for the processing events that pre-mRNAs undergo before becoming functional, translatable mRNAs in the cytoplasm. Binds poly(RG). In Homo sapiens (Human), this protein is Heterogeneous nuclear ribonucleoprotein H2 (HNRNPH2).